The primary structure comprises 140 residues: Gastrula zinc finger protein XlCGF49.1 (140 aa).

5 C2H2-type zinc fingers span residues 6–28 (FTCM…YKIH), 34–56 (FTCM…YKMH), 62–84 (FSCS…QKIH), 90–112 (YACT…WKIH), and 118–140 (FSCT…QKMH).

This sequence belongs to the krueppel C2H2-type zinc-finger protein family.

It localises to the nucleus. May be involved in transcriptional regulation. The chain is Gastrula zinc finger protein XlCGF49.1 from Xenopus laevis (African clawed frog).